The chain runs to 103 residues: Large ribosomal subunit protein bL21 (103 aa).

The protein belongs to the bacterial ribosomal protein bL21 family. As to quaternary structure, part of the 50S ribosomal subunit. Contacts protein L20.

Functionally, this protein binds to 23S rRNA in the presence of protein L20. The polypeptide is Large ribosomal subunit protein bL21 (Lactobacillus acidophilus (strain ATCC 700396 / NCK56 / N2 / NCFM)).